Reading from the N-terminus, the 78-residue chain is MKTLLLTFLVVTIVCLDLGYTLICHRVHGLQTCEPDQKFCFRKTTMFFPNHPVLLMGCTYSCPTEKYSVCCSTDKCNK.

An N-terminal signal peptide occupies residues 1–21 (MKTLLLTFLVVTIVCLDLGYT). 4 cysteine pairs are disulfide-bonded: Cys-24-Cys-40, Cys-33-Cys-58, Cys-62-Cys-70, and Cys-71-Cys-76.

The protein belongs to the three-finger toxin family. Short-chain subfamily. As to expression, expressed by the venom gland.

The protein localises to the secreted. This three-finger toxin binds and inhibits the nicotinic acetylcholine receptor (nAChR). This Ophiophagus hannah (King cobra) protein is Short neurotoxin SNTX11.